The following is a 223-amino-acid chain: Ribosomal RNA small subunit methyltransferase G (223 aa).

S-adenosyl-L-methionine contacts are provided by residues glycine 83, leucine 88, 134-135, and arginine 152; that span reads AE.

This sequence belongs to the methyltransferase superfamily. RNA methyltransferase RsmG family.

Its subcellular location is the cytoplasm. Its function is as follows. Specifically methylates the N7 position of guanine in position 518 of 16S rRNA. In Corynebacterium diphtheriae (strain ATCC 700971 / NCTC 13129 / Biotype gravis), this protein is Ribosomal RNA small subunit methyltransferase G.